The primary structure comprises 506 residues: ATP synthase subunit alpha (506 aa).

169 to 176 (GDRQTGKT) serves as a coordination point for ATP.

This sequence belongs to the ATPase alpha/beta chains family. In terms of assembly, F-type ATPases have 2 components, CF(1) - the catalytic core - and CF(0) - the membrane proton channel. CF(1) has five subunits: alpha(3), beta(3), gamma(1), delta(1), epsilon(1). CF(0) has three main subunits: a(1), b(2) and c(9-12). The alpha and beta chains form an alternating ring which encloses part of the gamma chain. CF(1) is attached to CF(0) by a central stalk formed by the gamma and epsilon chains, while a peripheral stalk is formed by the delta and b chains.

Its subcellular location is the cell membrane. The enzyme catalyses ATP + H2O + 4 H(+)(in) = ADP + phosphate + 5 H(+)(out). In terms of biological role, produces ATP from ADP in the presence of a proton gradient across the membrane. The alpha chain is a regulatory subunit. This is ATP synthase subunit alpha from Lawsonia intracellularis (strain PHE/MN1-00).